Consider the following 129-residue polypeptide: Large ribosomal subunit protein bL17 (129 aa).

Belongs to the bacterial ribosomal protein bL17 family. In terms of assembly, part of the 50S ribosomal subunit. Contacts protein L32.

This chain is Large ribosomal subunit protein bL17, found in Serratia proteamaculans (strain 568).